A 349-amino-acid chain; its full sequence is Nuclear distribution protein nudE homolog 1-A (349 aa).

The stretch at Val22–Lys189 forms a coiled coil.

The protein belongs to the nudE family. In terms of assembly, self-associates. Interacts with pafah1b1. In terms of processing, phosphorylated in mitosis.

The protein localises to the cytoplasm. The protein resides in the cytoskeleton. It localises to the microtubule organizing center. Its subcellular location is the centrosome. It is found in the spindle. The protein localises to the chromosome. The protein resides in the centromere. It localises to the kinetochore. Its subcellular location is the cleavage furrow. It is found in the cytoplasmic vesicle membrane. Its function is as follows. Required for centrosome duplication and formation and function of the mitotic spindle. In Xenopus laevis (African clawed frog), this protein is Nuclear distribution protein nudE homolog 1-A (nde1-a).